We begin with the raw amino-acid sequence, 273 residues long: 4-hydroxy-tetrahydrodipicolinate reductase (273 aa).

NAD(+) is bound by residues 12–17 (GAGGRM) and E38. R39 serves as a coordination point for NADP(+). NAD(+) is bound by residues 102-104 (GTT) and 126-129 (AANF). The active-site Proton donor/acceptor is H159. H160 contributes to the (S)-2,3,4,5-tetrahydrodipicolinate binding site. K163 functions as the Proton donor in the catalytic mechanism. Position 169 to 170 (169 to 170 (GT)) interacts with (S)-2,3,4,5-tetrahydrodipicolinate.

It belongs to the DapB family. Homotetramer.

The protein localises to the cytoplasm. The enzyme catalyses (S)-2,3,4,5-tetrahydrodipicolinate + NAD(+) + H2O = (2S,4S)-4-hydroxy-2,3,4,5-tetrahydrodipicolinate + NADH + H(+). It carries out the reaction (S)-2,3,4,5-tetrahydrodipicolinate + NADP(+) + H2O = (2S,4S)-4-hydroxy-2,3,4,5-tetrahydrodipicolinate + NADPH + H(+). It functions in the pathway amino-acid biosynthesis; L-lysine biosynthesis via DAP pathway; (S)-tetrahydrodipicolinate from L-aspartate: step 4/4. Catalyzes the conversion of 4-hydroxy-tetrahydrodipicolinate (HTPA) to tetrahydrodipicolinate. This Pectobacterium carotovorum subsp. carotovorum (strain PC1) protein is 4-hydroxy-tetrahydrodipicolinate reductase.